Reading from the N-terminus, the 521-residue chain is Bifunctional purine biosynthesis protein PurH (521 aa).

The region spanning 1-145 (MIKQALISVS…KNHRDVTVVV (145 aa)) is the MGS-like domain.

This sequence belongs to the PurH family.

The catalysed reaction is (6R)-10-formyltetrahydrofolate + 5-amino-1-(5-phospho-beta-D-ribosyl)imidazole-4-carboxamide = 5-formamido-1-(5-phospho-D-ribosyl)imidazole-4-carboxamide + (6S)-5,6,7,8-tetrahydrofolate. It carries out the reaction IMP + H2O = 5-formamido-1-(5-phospho-D-ribosyl)imidazole-4-carboxamide. It participates in purine metabolism; IMP biosynthesis via de novo pathway; 5-formamido-1-(5-phospho-D-ribosyl)imidazole-4-carboxamide from 5-amino-1-(5-phospho-D-ribosyl)imidazole-4-carboxamide (10-formyl THF route): step 1/1. The protein operates within purine metabolism; IMP biosynthesis via de novo pathway; IMP from 5-formamido-1-(5-phospho-D-ribosyl)imidazole-4-carboxamide: step 1/1. This is Bifunctional purine biosynthesis protein PurH from Burkholderia orbicola (strain MC0-3).